The sequence spans 519 residues: Na(+)/H(+) exchange regulatory cofactor NHE-RF3 (519 aa).

Residues 9–90 form the PDZ 1 domain; it reads ECKLSKQEGQ…SVTLLVLDGD (82 aa). Phosphoserine occurs at positions 108, 148, 192, 250, 334, and 348. PDZ domains lie at 128-215 and 243-323; these read EPCA…VDKE and VVVI…LDKE. Residues 348-374 form a disordered region; it reads SVKEGPAPIPAPLEATGSEPTEDAEGH. One can recognise a PDZ 4 domain in the interval 378–458; that stretch reads LCRLLKEDDS…HVTLLVCGKM (81 aa). Phosphothreonine occurs at positions 451 and 488. The segment at 479 to 519 is disordered; sequence VAGPDEKGETSAESEHDAHPAKDRTLSTASHSSSNSEDTEM. Residues 482–503 show a composition bias toward basic and acidic residues; the sequence is PDEKGETSAESEHDAHPAKDRT. Serine 489 and serine 492 each carry phosphoserine. Threonine 503 carries the phosphothreonine modification. Over residues 505-519 the composition is skewed to low complexity; it reads STASHSSSNSEDTEM. Serine 508, serine 510, serine 511, serine 512, and serine 514 each carry phosphoserine.

It belongs to the NHER family. Interacts with PDZK1IP1 and ABCC2. Binds to the C-terminal region of SLC26A3. Interacts (via C-terminal PDZ domain) with SLC26A6 (via C-terminal domain). Interacts (via C-terminal PDZ domain) with SLC9A3 (via C-terminal domain). Component of a complex, composed of PDZK1, SYNGAP1, KLHL17 and NMDA receptors. Interacts (via PDZ1 domain) directly with KLHL17; the interaction is important for integrity of actin cytoskeleton structures in neurons. Forms a heterodimeric complex with NHERF1. Interacts with AKAP2, BCR, CFTR, SLCO1A1, SLC22A12, SLC22A4, SLC22A5, SLC26A6, NHERF2 and SLC17A1. Interacts (via the first PDZ domain) with PTGIR (via non-isoprenylated C-terminus). Interacts (via PDZ domains 1 and 3) with SCARB1 (C-terminal domain). Interacts (via PDZ domains 1 and 3) with SLC5A8 (via PDZ-binding motif); interaction increases nicotinate transport activity of SLC5A8. Expressed in kidney, liver, small intestine. brain, lung, and testis (at protein level).

The protein localises to the membrane. It is found in the cell membrane. Its function is as follows. A scaffold protein that connects plasma membrane proteins and regulatory components, regulating their surface expression in epithelial cells apical domains. May be involved in the coordination of a diverse range of regulatory processes for ion transport and second messenger cascades. In complex with NHERF1, may cluster proteins that are functionally dependent in a mutual fashion and modulate the trafficking and the activity of the associated membrane proteins. May play a role in the cellular mechanisms associated with multidrug resistance through its interaction with ABCC2 and PDZK1IP1. May potentiate the CFTR chloride channel activity. Required for normal cell-surface expression of SCARB1. Plays a role in maintaining normal plasma cholesterol levels via its effects on SCARB1. Plays a role in the normal localization and function of the chloride-anion exchanger SLC26A6 to the plasma membrane in the brush border of the proximal tubule of the kidney. May be involved in the regulation of proximal tubular Na(+)-dependent inorganic phosphate cotransport therefore playing an important role in tubule function. In Mus musculus (Mouse), this protein is Na(+)/H(+) exchange regulatory cofactor NHE-RF3 (Pdzk1).